Consider the following 467-residue polypeptide: MHSTTPISSLFSFTSPAVKRLLGWKQGDEEEKWAEKAVDSLVKKLKKKKGAMDELERALSCPGQPSKCVTIPRSLDGRLQVSHRKGLPHVIYCRVWRWPDLQSHHELKPLECCEFPFGSKQKEVCINPYHYRRVETPVLPPVLVPRHSEYNPQLSLLAKFRSASLHSEPLMPHNATYPDSFQQPPCSALPPSPSHAFSQSPCTASYPHSPGSPSEPESPYQHSVDTPPLPYHATEASETQSGQPVDATADRHVVLSIPNGDFRPVCYEEPQHWCSVAYYELNNRVGETFQASSRSVLIDGFTDPSNNRNRFCLGLLSNVNRNSTIENTRRHIGKGVHLYYVGGEVYAECVSDSSIFVQSRNCNYQHGFHPATVCKIPSGCSLKVFNNQLFAQLLAQSVHHGFEVVYELTKMCTIRMSFVKGWGAEYHRQDVTSTPCWIEIHLHGPLQWLDKVLTQMGSPHNPISSVS.

One can recognise an MH1 domain in the interval 16–140; the sequence is PAVKRLLGWK…YRRVETPVLP (125 aa). Residues C68, C113, C125, and H130 each contribute to the Zn(2+) site. The segment at 174–246 is disordered; that stretch reads NATYPDSFQQ…SETQSGQPVD (73 aa). A compositionally biased stretch (low complexity) spans 205–220; sequence SYPHSPGSPSEPESPY. One can recognise an MH2 domain in the interval 273–467; sequence WCSVAYYELN…SPHNPISSVS (195 aa).

Belongs to the dwarfin/SMAD family. Interaction with the co-SMAD SMAD4. Interacts with PEBP2-alpha subunit. Interacts with RANBP3L. Phosphorylated on serine by BMP (bone morphogenetic proteins) type 1 receptor kinase. Expressed in heart, brain, placenta, lung, skeletal muscle, prostate, testis, ovary and small intestine. Also expressed in fetal brain, lung and kidney.

It localises to the cytoplasm. Its subcellular location is the nucleus. Its function is as follows. Transcriptional modulator activated by BMP (bone morphogenetic proteins) type 1 receptor kinase. SMAD9 is a receptor-regulated SMAD (R-SMAD). The polypeptide is Mothers against decapentaplegic homolog 9 (SMAD9) (Homo sapiens (Human)).